A 132-amino-acid chain; its full sequence is DNA-directed RNA polymerase subunit omega (132 aa).

This sequence belongs to the RNA polymerase subunit omega family. The RNAP catalytic core consists of 2 alpha, 1 beta, 1 beta' and 1 omega subunit. When a sigma factor is associated with the core the holoenzyme is formed, which can initiate transcription.

It catalyses the reaction RNA(n) + a ribonucleoside 5'-triphosphate = RNA(n+1) + diphosphate. In terms of biological role, promotes RNA polymerase assembly. Latches the N- and C-terminal regions of the beta' subunit thereby facilitating its interaction with the beta and alpha subunits. The polypeptide is DNA-directed RNA polymerase subunit omega (Ehrlichia ruminantium (strain Welgevonden)).